A 156-amino-acid chain; its full sequence is Protein LlR18A (156 aa).

The trans-zeatin site is built by N8 and D28. Positions 32 and 38 each coordinate Ca(2+). Trans-zeatin-binding residues include K54, D133, and K136.

The protein belongs to the BetVI family. As to expression, expressed constitutively in roots.

Its subcellular location is the cytoplasm. It is found in the cytosol. Functionally, class II ribonuclease (RNase). Binds to cytokinins. Interacts with melatonin. This is Protein LlR18A (LLR18A) from Lupinus luteus (European yellow lupine).